Consider the following 265-residue polypeptide: 3-methyl-2-oxobutanoate hydroxymethyltransferase (265 aa).

The Mg(2+) site is built by Asp45 and Asp84. 3-methyl-2-oxobutanoate contacts are provided by residues 45–46 (DS), Asp84, and Lys112. Glu114 contacts Mg(2+). Glu181 acts as the Proton acceptor in catalysis.

The protein belongs to the PanB family. Homodecamer; pentamer of dimers. Requires Mg(2+) as cofactor.

It is found in the cytoplasm. It carries out the reaction 3-methyl-2-oxobutanoate + (6R)-5,10-methylene-5,6,7,8-tetrahydrofolate + H2O = 2-dehydropantoate + (6S)-5,6,7,8-tetrahydrofolate. The protein operates within cofactor biosynthesis; (R)-pantothenate biosynthesis; (R)-pantoate from 3-methyl-2-oxobutanoate: step 1/2. In terms of biological role, catalyzes the reversible reaction in which hydroxymethyl group from 5,10-methylenetetrahydrofolate is transferred onto alpha-ketoisovalerate to form ketopantoate. This Pseudoalteromonas atlantica (strain T6c / ATCC BAA-1087) protein is 3-methyl-2-oxobutanoate hydroxymethyltransferase.